The primary structure comprises 159 residues: Phosphopantetheine adenylyltransferase (159 aa).

S8 is a binding site for substrate. ATP-binding positions include S8–F9 and H16. Residues K40, T72, and R86 each contribute to the substrate site. ATP is bound by residues G87 to R89, E97, and H122 to S128.

The protein belongs to the bacterial CoaD family. As to quaternary structure, homohexamer. It depends on Mg(2+) as a cofactor.

Its subcellular location is the cytoplasm. The enzyme catalyses (R)-4'-phosphopantetheine + ATP + H(+) = 3'-dephospho-CoA + diphosphate. The protein operates within cofactor biosynthesis; coenzyme A biosynthesis; CoA from (R)-pantothenate: step 4/5. In terms of biological role, reversibly transfers an adenylyl group from ATP to 4'-phosphopantetheine, yielding dephospho-CoA (dPCoA) and pyrophosphate. This chain is Phosphopantetheine adenylyltransferase, found in Synechococcus sp. (strain JA-3-3Ab) (Cyanobacteria bacterium Yellowstone A-Prime).